Consider the following 271-residue polypeptide: D-methionine-binding lipoprotein MetQ (271 aa).

Positions 1 to 22 (MAFKFKTFAAVGALIGSLALAG) are cleaved as a signal peptide. Residue Cys23 is the site of N-palmitoyl cysteine attachment. Cys23 carries the S-diacylglycerol cysteine lipid modification.

It belongs to the NlpA lipoprotein family.

It is found in the cell membrane. Its function is as follows. This protein is a component of a D-methionine permease, a binding protein-dependent, ATP-driven transport system. This chain is D-methionine-binding lipoprotein MetQ (metQ), found in Salmonella typhi.